The sequence spans 152 residues: Small ribosomal subunit protein uS13 (152 aa).

It belongs to the universal ribosomal protein uS13 family. Part of the 30S ribosomal subunit. Forms a loose heterodimer with protein S19. Forms two bridges to the 50S subunit in the 70S ribosome.

Functionally, located at the top of the head of the 30S subunit, it contacts several helices of the 16S rRNA. In the 70S ribosome it contacts the 23S rRNA (bridge B1a) and protein L5 of the 50S subunit (bridge B1b), connecting the 2 subunits; these bridges are implicated in subunit movement. The protein is Small ribosomal subunit protein uS13 of Pyrobaculum arsenaticum (strain DSM 13514 / JCM 11321 / PZ6).